A 393-amino-acid polypeptide reads, in one-letter code: S-adenosylmethionine synthase (393 aa).

Glu-9 is a Mg(2+) binding site. Residue His-15 coordinates ATP. Glu-43 is a K(+) binding site. The L-methionine site is built by Glu-56 and Gln-99. ATP contacts are provided by residues 167–169 (DGK), 235–238 (SGRF), Asp-246, 252–253 (RK), Ala-269, Lys-273, and Lys-277. Asp-246 is an L-methionine binding site. Lys-277 is an L-methionine binding site.

Belongs to the AdoMet synthase family. As to quaternary structure, homotetramer. Requires Mn(2+) as cofactor. It depends on Mg(2+) as a cofactor. Co(2+) is required as a cofactor. K(+) serves as cofactor.

It is found in the cytoplasm. It carries out the reaction L-methionine + ATP + H2O = S-adenosyl-L-methionine + phosphate + diphosphate. It functions in the pathway amino-acid biosynthesis; S-adenosyl-L-methionine biosynthesis; S-adenosyl-L-methionine from L-methionine: step 1/1. Functionally, catalyzes the formation of S-adenosylmethionine from methionine and ATP. The reaction comprises two steps that are both catalyzed by the same enzyme: formation of S-adenosylmethionine (AdoMet) and triphosphate, and subsequent hydrolysis of the triphosphate. In Brassica rapa subsp. pekinensis (Chinese cabbage), this protein is S-adenosylmethionine synthase (SAMS).